The following is a 404-amino-acid chain: MAASATTSTLAVTMFGYPNRNCHLKPPATATLRFWRSAAAAAVATSRREAEAEEADEVRRCLAPARLEVLEQMEPWVEAHVLPLLKPAEEAWQPADLVPDAAALGADGFHAACVELRGRAAGVPDAHLVCLVGNMVTEEALPTYQSMANRFESARDVTGADATAWARWIRGWSAEENRHGDVLNRYMYLSGRLDMRQVERTVHRLIGSGMAMHAPASPYHGFIYVAFQERATAISHGNTARNVRAHGDDALARICGAIASDEKRHEAAYTRVVERLLEADPDTTVRALAYMMRRRITMPAALMDDGRDADLFAHYAAAAQQAGTYTASDYRGILEHLIRRWRVAELEAGLSGEGRRARDYVCALPQKIRRMEEKAHDRAAQMRKRPTAIPFSWIFDKPVDLMLP.

The N-terminal 39 residues, 1-39, are a transit peptide targeting the chloroplast; sequence MAASATTSTLAVTMFGYPNRNCHLKPPATATLRFWRSAA. Fe cation-binding residues include Glu138, Glu176, His179, Glu229, Glu262, and His265.

Belongs to the fatty acid desaturase type 2 family. In terms of assembly, homodimer. Requires Fe(2+) as cofactor.

It localises to the plastid. The protein resides in the chloroplast. The protein operates within lipid metabolism; fatty acid metabolism. Introduces a cis double bond in the acyl chain of an acyl-[acyl-carrier protein]. This Oryza sativa subsp. indica (Rice) protein is Acyl-[acyl-carrier-protein] desaturase 7, chloroplastic.